A 110-amino-acid polypeptide reads, in one-letter code: uncharacterized protein (110 aa).

Positions 1-19 (MKYLVGCLCLAAICLSAGA) are cleaved as a signal peptide. Asparagine 101 is a glycosylation site (N-linked (GlcNAc...) asparagine).

Component of the acid-soluble and acid-insoluble organic matrix of prismatic shell layers (at protein level).

The protein localises to the secreted. This is an uncharacterized protein from Haliotis asinina (Donkey's ear abalone).